Consider the following 143-residue polypeptide: Transcriptional regulator MraZ (143 aa).

SpoVT-AbrB domains lie at 5–47 (EYFH…PVSA) and 76–119 (ASNQ…DKEK).

It belongs to the MraZ family. In terms of assembly, forms oligomers.

The protein localises to the cytoplasm. The protein resides in the nucleoid. The sequence is that of Transcriptional regulator MraZ from Finegoldia magna (strain ATCC 29328 / DSM 20472 / WAL 2508) (Peptostreptococcus magnus).